The sequence spans 97 residues: uncharacterized protein (97 aa).

This is an uncharacterized protein from Archaeoglobus fulgidus (strain ATCC 49558 / DSM 4304 / JCM 9628 / NBRC 100126 / VC-16).